The chain runs to 1045 residues: Translation initiation factor IF-2 (1045 aa).

2 disordered regions span residues 1–169 and 184–451; these read MSDE…AQAP and QAPA…RGGP. A compositionally biased stretch (gly residues) spans 83–94; that stretch reads SGGGGSSAGGLS. The segment covering 103-123 has biased composition (basic and acidic residues); sequence RAIEAAREHQERQAAERRAAE. A compositionally biased stretch (low complexity) spans 124–151; sequence ARAASEAAAARDAAAKSAAAAKAAAAPA. The segment covering 152–163 has biased composition (pro residues); that stretch reads PEAPAAPAPTPA. Over residues 184–199 the composition is skewed to low complexity; that stretch reads QAPAAPVAAAPAAPRA. Basic and acidic residues-rich tracts occupy residues 227 to 237 and 302 to 323; these read EPSRDRRDDRS and RNDRPQGDRPQGDRPQGDRPQG. A compositionally biased stretch (pro residues) spans 338-348; sequence RPAPGARPGPG. A compositionally biased stretch (low complexity) spans 352 to 363; that stretch reads GARPGVPASAPA. 2 stretches are compositionally biased toward basic and acidic residues: residues 381-393 and 438-450; these read VGRKPEEDDDRRK and RAREREKEKRRGG. Residues 540-710 enclose the tr-type G domain; it reads PRPPVVTVMG…LLLAEVMDLK (171 aa). The G1 stretch occupies residues 549 to 556; the sequence is GHVDHGKT. A GTP-binding site is contributed by 549 to 556; sequence GHVDHGKT. The G2 stretch occupies residues 574-578; it reads GITQH. The interval 596–599 is G3; it reads DTPG. Residues 596–600 and 650–653 each bind GTP; these read DTPGH and NKMD. A G4 region spans residues 650–653; that stretch reads NKMD. The G5 stretch occupies residues 686–688; it reads SAK.

Belongs to the TRAFAC class translation factor GTPase superfamily. Classic translation factor GTPase family. IF-2 subfamily.

It is found in the cytoplasm. Functionally, one of the essential components for the initiation of protein synthesis. Protects formylmethionyl-tRNA from spontaneous hydrolysis and promotes its binding to the 30S ribosomal subunits. Also involved in the hydrolysis of GTP during the formation of the 70S ribosomal complex. The chain is Translation initiation factor IF-2 from Caulobacter sp. (strain K31).